Consider the following 343-residue polypeptide: L-threonine 3-dehydrogenase (343 aa).

Cysteine 38 is a binding site for Zn(2+). Residues threonine 40 and histidine 43 each act as charge relay system in the active site. Residues histidine 63, glutamate 64, cysteine 93, cysteine 96, cysteine 99, and cysteine 107 each contribute to the Zn(2+) site. NAD(+)-binding positions include isoleucine 175, aspartate 195, arginine 200, 262 to 264 (LGI), and 286 to 287 (IY).

This sequence belongs to the zinc-containing alcohol dehydrogenase family. As to quaternary structure, homotetramer. The cofactor is Zn(2+).

The protein localises to the cytoplasm. It catalyses the reaction L-threonine + NAD(+) = (2S)-2-amino-3-oxobutanoate + NADH + H(+). The protein operates within amino-acid degradation; L-threonine degradation via oxydo-reductase pathway; glycine from L-threonine: step 1/2. Functionally, catalyzes the NAD(+)-dependent oxidation of L-threonine to 2-amino-3-ketobutyrate. The polypeptide is L-threonine 3-dehydrogenase (Pectobacterium carotovorum subsp. carotovorum (strain PC1)).